The sequence spans 500 residues: Na(+)/H(+) antiporter NhaB (500 aa).

Transmembrane regions (helical) follow at residues 28-50, 58-78, 96-116, 129-149, 150-170, 205-225, 241-261, 311-331, 350-370, 394-414, 449-469, and 477-497; these read FLML…LLVI, MALK…ALLL, VILL…LLLF, ALLA…LDAL, TVTA…HRVA, LLMH…VGEP, FFLK…VTCL, ILIA…LMVI, FKDA…VAVI, MLFI…VATI, VATP…IAPL, and MVWM…YAVS.

The protein belongs to the NhaB Na(+)/H(+) (TC 2.A.34) antiporter family.

Its subcellular location is the cell inner membrane. It catalyses the reaction 2 Na(+)(in) + 3 H(+)(out) = 2 Na(+)(out) + 3 H(+)(in). Na(+)/H(+) antiporter that extrudes sodium in exchange for external protons. The protein is Na(+)/H(+) antiporter NhaB of Pseudomonas fluorescens (strain Pf0-1).